The sequence spans 480 residues: Sestrin-2 (480 aa).

At Met1 the chain carries N-acetylmethionine. Positions 20–45 are disordered; the sequence is PGGVGDSGPGEEQRESRARRGPRGPS. The tract at residues 66-239 is N-terminal domain; mediates the alkylhydroperoxide reductase activity; the sequence is GLEALMSSGR…APTPPSEQSS (174 aa). Cys125 (cysteine sulfenic acid (-SOH) intermediate) is an active-site residue. A Glycyl lysine isopeptide (Lys-Gly) (interchain with G-Cter in ubiquitin) cross-link involves residue Lys175. 2 disordered regions span residues 222–252 and 272–291; these read ADGSPAPQAPTPPSEQSSPPSRDPLNNSGGF and LLRDEGTSQEEMESRFELEK. Ser249 is modified (phosphoserine). The interval 308–480 is C-terminal domain; mediates TORC1 regulation; it reads PHPDMLCFVE…ALRAITRYMT (173 aa). L-leucine-binding positions include 374-377, Thr386, and Glu451; that span reads TYNT.

It belongs to the sestrin family. As to quaternary structure, interacts with the GATOR2 complex which is composed of MIOS, SEC13, SEH1L, WDR24 and WDR59; the interaction is negatively regulated by leucine. Conveys leucine availability via direct interaction with SEH1L and WDR24 components of the GATOR2 complex. Interacts with RRAGA, RRAGB, RRAGC and RRAGD; may function as a guanine nucleotide dissociation inhibitor for RRAGs and regulate them. May interact with the TORC2 complex. Interacts with KEAP1, RBX1, SQSTM and ULK1; to regulate the degradation of KEAP1. May also associate with the complex composed of TSC1, TSC2 and the AMP-responsive protein kinase/AMPK to regulate TORC1 signaling. May interact with PRDX1. In terms of processing, phosphorylated by ULK1 at multiple sites. Post-translationally, ubiquitinated at Lys-175 by RNF167 via 'Lys-63'-linked polyubiquitination in response to leucine deprivation: ubiquitination promotes SESN2-interaction with the GATOR2 complex, leading to inhibit the TORC1 signaling pathway. Deubiquitinated at Lys-175 by STAMBPL1, promoting the TORC1 signaling pathway. Ubiquitinated by RNF186; ubiquitination mediates proteasomal degradation. As to expression, widely expressed.

The protein localises to the cytoplasm. The catalysed reaction is a hydroperoxide + L-cysteinyl-[protein] = S-hydroxy-L-cysteinyl-[protein] + an alcohol. Its function is as follows. Functions as an intracellular leucine sensor that negatively regulates the mTORC1 signaling pathway through the GATOR complex. In absence of leucine, binds the GATOR subcomplex GATOR2 and prevents mTORC1 signaling. Binding of leucine to SESN2 disrupts its interaction with GATOR2 thereby activating the TORC1 signaling pathway. This stress-inducible metabolic regulator also plays a role in protection against oxidative and genotoxic stresses. May negatively regulate protein translation in response to endoplasmic reticulum stress, via mTORC1. May positively regulate the transcription by NFE2L2 of genes involved in the response to oxidative stress by facilitating the SQSTM1-mediated autophagic degradation of KEAP1. May also mediate TP53 inhibition of TORC1 signaling upon genotoxic stress. Moreover, may prevent the accumulation of reactive oxygen species (ROS) through the alkylhydroperoxide reductase activity born by the N-terminal domain of the protein. Was originally reported to contribute to oxidative stress resistance by reducing PRDX1. However, this could not be confirmed. This Homo sapiens (Human) protein is Sestrin-2.